The following is a 227-amino-acid chain: MTKNEYLIEKLQVDLANHITELTSAYGEVTIECEVQNLLPVMIELRDREEFSFDELIDLCGVDYLHYGDYDWETESATEHGFSRGVERQEAKAYAVNKPRFAVVYHLLSTKKNHRLRVKLFVEESHLIVPSVHHLWKSANWFEREAYDLYGILFDGHPDLRRLLTDYGFIGHPFRKDFPLSGEVEMRYDAKLQKVIYAPVDIVPRIVVPKVIRNDNRYIGNEGSKND.

The protein belongs to the complex I 30 kDa subunit family. NDH-1 is composed of 14 different subunits. Subunits NuoB, C, D, E, F, and G constitute the peripheral sector of the complex.

The protein localises to the cell inner membrane. It carries out the reaction a quinone + NADH + 5 H(+)(in) = a quinol + NAD(+) + 4 H(+)(out). Functionally, NDH-1 shuttles electrons from NADH, via FMN and iron-sulfur (Fe-S) centers, to quinones in the respiratory chain. The immediate electron acceptor for the enzyme in this species is believed to be ubiquinone. Couples the redox reaction to proton translocation (for every two electrons transferred, four hydrogen ions are translocated across the cytoplasmic membrane), and thus conserves the redox energy in a proton gradient. The protein is NADH-quinone oxidoreductase subunit C of Legionella pneumophila (strain Lens).